The following is a 169-amino-acid chain: Putative cysteine protease YraA (169 aa).

In terms of domain architecture, PfpI endopeptidase spans Lys-3–Lys-169. The active-site Nucleophile is the Cys-103. The active site involves His-104.

It belongs to the peptidase C56 family.

Its function is as follows. Functions in the protection against aldehyde-stress, possibly by degrading damaged proteins. This Bacillus subtilis (strain 168) protein is Putative cysteine protease YraA (yraA).